Here is a 407-residue protein sequence, read N- to C-terminus: Nicotinate phosphoribosyltransferase (407 aa).

His228 carries the post-translational modification Phosphohistidine; by autocatalysis.

The protein belongs to the NAPRTase family. Post-translationally, transiently phosphorylated on a His residue during the reaction cycle. Phosphorylation strongly increases the affinity for substrates and increases the rate of nicotinate D-ribonucleotide production. Dephosphorylation regenerates the low-affinity form of the enzyme, leading to product release.

The enzyme catalyses nicotinate + 5-phospho-alpha-D-ribose 1-diphosphate + ATP + H2O = nicotinate beta-D-ribonucleotide + ADP + phosphate + diphosphate. Its pathway is cofactor biosynthesis; NAD(+) biosynthesis; nicotinate D-ribonucleotide from nicotinate: step 1/1. Its activity is regulated as follows. 100-fold more active in the presence of saturating ATP. In terms of biological role, catalyzes the synthesis of beta-nicotinate D-ribonucleotide from nicotinate and 5-phospho-D-ribose 1-phosphate at the expense of ATP. Functions in the deamidating salvage pathway for production of NAD from nicotinamide. Displays a strict preference for nicotinate over nicotinamide substrate. The polypeptide is Nicotinate phosphoribosyltransferase (Acinetobacter baylyi (strain ATCC 33305 / BD413 / ADP1)).